The sequence spans 359 residues: Peptide chain release factor 1 (359 aa).

Glutamine 235 bears the N5-methylglutamine mark.

This sequence belongs to the prokaryotic/mitochondrial release factor family. In terms of processing, methylated by PrmC. Methylation increases the termination efficiency of RF1.

The protein resides in the cytoplasm. Functionally, peptide chain release factor 1 directs the termination of translation in response to the peptide chain termination codons UAG and UAA. This Aromatoleum aromaticum (strain DSM 19018 / LMG 30748 / EbN1) (Azoarcus sp. (strain EbN1)) protein is Peptide chain release factor 1.